The following is a 74-amino-acid chain: MKSGIHPNYVETNVVCGCGNTFTTRSTKESGHIVVEVCSQCHPFYTGKQKILDSGGRVARFEARYGKRKAAADK.

4 residues coordinate Zn(2+): C16, C18, C38, and C41.

The protein belongs to the bacterial ribosomal protein bL31 family. Type A subfamily. As to quaternary structure, part of the 50S ribosomal subunit. The cofactor is Zn(2+).

Its function is as follows. Binds the 23S rRNA. The sequence is that of Large ribosomal subunit protein bL31 from Mycobacteroides abscessus (strain ATCC 19977 / DSM 44196 / CCUG 20993 / CIP 104536 / JCM 13569 / NCTC 13031 / TMC 1543 / L948) (Mycobacterium abscessus).